The primary structure comprises 593 residues: Translocon at the outer membrane of chloroplasts 64 (593 aa).

Over 1 to 4 (MKSM) the chain is Chloroplast intermembrane. The chain crosses the membrane as a helical span at residues 5–25 (ASPSSQIWVILGLGLAGIYVL). The Cytoplasmic portion of the chain corresponds to 26–144 (TRKLTQAVKE…NPAVPNRVPG (119 aa)). The chain crosses the membrane as a helical span at residues 145–165 (GSSSGAAVAVAANFVDFSLGV). The Chloroplast intermembrane portion of the chain corresponds to 166 to 403 (DTSGGVRVPA…LSHDYQSRAL (238 aa)). Residues 404–424 (SLLSIASISGCCQVTVPLGFF) form a helical membrane-spanning segment. The Cytoplasmic portion of the chain corresponds to 425–593 (DKNPVSVSLI…SAERLRKLFQ (169 aa)). TPR repeat units lie at residues 477–510 (AEISKEKGNQAYKDKQWQKAIGFYTEAIKLCGNN), 511–544 (ATYYSNRAQAYLELGSYLQAEEDCTTAISFDKKN), and 545–578 (VKAYFRRGTAREMLGYYKEAIDDFKYALVLEPTN).

Part of the Toc complex and of the intermembrane space complex. Interacts with TOC12, TIC22 and with the cytosolic domain of TOC34 in a GTP dependent manner. Interacts (via TPR region) with HSP90 and with HSP70 with low efficiency.

It is found in the plastid. Its subcellular location is the chloroplast outer membrane. Functionally, chaperone receptor mediating Hsp90-dependent protein targeting to chloroplasts. Bi-functional preprotein receptor acting on both sides of the membrane. This is Translocon at the outer membrane of chloroplasts 64 (TOC64) from Pisum sativum (Garden pea).